Here is a 320-residue protein sequence, read N- to C-terminus: UDP-N-acetylenolpyruvoylglucosamine reductase (320 aa).

The FAD-binding PCMH-type domain maps to R34 to E200. R180 is a catalytic residue. S229 functions as the Proton donor in the catalytic mechanism. E299 is a catalytic residue.

The protein belongs to the MurB family. The cofactor is FAD.

It is found in the cytoplasm. The enzyme catalyses UDP-N-acetyl-alpha-D-muramate + NADP(+) = UDP-N-acetyl-3-O-(1-carboxyvinyl)-alpha-D-glucosamine + NADPH + H(+). It participates in cell wall biogenesis; peptidoglycan biosynthesis. Its function is as follows. Cell wall formation. This Mesorhizobium japonicum (strain LMG 29417 / CECT 9101 / MAFF 303099) (Mesorhizobium loti (strain MAFF 303099)) protein is UDP-N-acetylenolpyruvoylglucosamine reductase.